The chain runs to 548 residues: Serine/threonine-protein phosphatase 2A 56 kDa regulatory subunit delta 1 isoform (548 aa).

Residues 1–10 (MKGIKSKMLS) are compositionally biased toward basic residues. A disordered region spans residues 1–75 (MKGIKSKMLS…KKVPIDTTPT (75 aa)). Over residues 27 to 39 (KKSNSHDSSKAPK) the composition is skewed to basic and acidic residues. Phosphotyrosine is present on Tyr-96. A phosphoserine mark is found at Ser-99, Ser-109, and Ser-542.

Belongs to the phosphatase 2A regulatory subunit B family. In terms of assembly, PP2A consists of a common heterodimeric core enzyme, composed of a 36 kDa catalytic subunit (subunit C) and a 65 kDa constant regulatory subunit (PR65 or subunit A), that associates with a variety of regulatory subunits. Proteins that associate with the core dimer include three families of regulatory subunits B (the R2/B/PR55/B55, R3/B''/PR72/PR130/PR59 and R5/B'/B56 families), the 48 kDa variable regulatory subunit, viral proteins, and cell signaling molecules.

The protein resides in the cytoplasm. Its subcellular location is the nucleus. The B regulatory subunit might modulate substrate selectivity and catalytic activity, and might also direct the localization of the catalytic enzyme to a particular subcellular compartment. Has a role in cell shape control and septum formation. In Schizosaccharomyces pombe (strain 972 / ATCC 24843) (Fission yeast), this protein is Serine/threonine-protein phosphatase 2A 56 kDa regulatory subunit delta 1 isoform (par1).